We begin with the raw amino-acid sequence, 202 residues long: Endothelin-1 (202 aa).

Residues 1-23 (MDYFSMMVSLLLVAFHGAPETAA) form the signal peptide. Positions 24–49 (SGTELSTGAENPGEKPPASAPWRPRR) are disordered. Positions 24 to 50 (SGTELSTGAENPGEKPPASAPWRPRRS) are excised as a propeptide. Cystine bridges form between Cys-53–Cys-67 and Cys-55–Cys-63. A propeptide spanning residues 74-202 (VNTPGHIVPY…EQKVTHNRTH (129 aa)) is cleaved from the precursor. The endothelin-like stretch occupies residues 110–124 (CQCTSPHDKKCWNFC).

Belongs to the endothelin/sarafotoxin family.

Its subcellular location is the secreted. In terms of biological role, endothelins are endothelium-derived vasoconstrictor peptides. Probable ligand for G-protein coupled receptors EDNRA and EDNRB which activates PTK2B, BCAR1, BCAR3 and, GTPases RAP1 and RHOA cascade in glomerular mesangial cells. Also binds the DEAR/FBXW7-AS1 receptor. Promotes mesenteric arterial wall remodeling via activation of ROCK signaling and subsequent colocalization of NFATC3 with F-actin filaments. NFATC3 then translocates to the nucleus where it subsequently promotes the transcription of the smooth muscle hypertrophy and differentiation marker ACTA2. The protein is Endothelin-1 (EDN1) of Oryctolagus cuniculus (Rabbit).